We begin with the raw amino-acid sequence, 254 residues long: uncharacterized protein (254 aa).

The next 8 membrane-spanning stretches (helical) occupy residues 41–61 (VFVFIFFLLAATISFTQIKII), 64–84 (IFQAPAIGIKFLQLAPGEYFF), 91–111 (IYCGIVATTPFGVYQVILYIL), 125–145 (ILIGSIVLFIVGGIFAYFVLA), 146–166 (PAALNFLISYGADIVEPLWSF), 172–192 (FILLLLFSTGLAFEIPIIQLL), 204–224 (MLLAWRYIIIISTIIGAVLTP), and 232–252 (IIMSSAVLALYFSGVIILFLL).

It belongs to the TatC family.

Its subcellular location is the plastid. It is found in the chloroplast membrane. This is an uncharacterized protein from Porphyra purpurea (Red seaweed).